The sequence spans 341 residues: S-adenosylmethionine:tRNA ribosyltransferase-isomerase (341 aa).

It belongs to the QueA family. As to quaternary structure, monomer.

It localises to the cytoplasm. The enzyme catalyses 7-aminomethyl-7-carbaguanosine(34) in tRNA + S-adenosyl-L-methionine = epoxyqueuosine(34) in tRNA + adenine + L-methionine + 2 H(+). The protein operates within tRNA modification; tRNA-queuosine biosynthesis. In terms of biological role, transfers and isomerizes the ribose moiety from AdoMet to the 7-aminomethyl group of 7-deazaguanine (preQ1-tRNA) to give epoxyqueuosine (oQ-tRNA). The chain is S-adenosylmethionine:tRNA ribosyltransferase-isomerase from Chlorobium luteolum (strain DSM 273 / BCRC 81028 / 2530) (Pelodictyon luteolum).